The following is a 201-amino-acid chain: Large ribosomal subunit protein bL25 (201 aa).

The protein belongs to the bacterial ribosomal protein bL25 family. CTC subfamily. As to quaternary structure, part of the 50S ribosomal subunit; part of the 5S rRNA/L5/L18/L25 subcomplex. Contacts the 5S rRNA. Binds to the 5S rRNA independently of L5 and L18.

Its function is as follows. This is one of the proteins that binds to the 5S RNA in the ribosome where it forms part of the central protuberance. The protein is Large ribosomal subunit protein bL25 of Chlorobaculum parvum (strain DSM 263 / NCIMB 8327) (Chlorobium vibrioforme subsp. thiosulfatophilum).